A 240-amino-acid polypeptide reads, in one-letter code: Thiopurine S-methyltransferase (240 aa).

Residue 24–35 (WKEKWVTRHISF) participates in S-adenosyl-L-methionine binding. Phosphoserine is present on S34. F35 serves as a coordination point for substrate. K53 carries the N6-acetyllysine modification. S-adenosyl-L-methionine is bound by residues L64, E85, 129-130 (SI), and R147.

It belongs to the class I-like SAM-binding methyltransferase superfamily. TPMT family. As to quaternary structure, monomer.

The protein resides in the cytoplasm. The catalysed reaction is S-adenosyl-L-methionine + a thiopurine = S-adenosyl-L-homocysteine + a thiopurine S-methylether.. The enzyme catalyses mercaptopurine + S-adenosyl-L-methionine = 6-methylthiopurine + S-adenosyl-L-homocysteine + H(+). Functionally, catalyzes the S-methylation of thiopurine drugs such as 6-mercaptopurine (also called mercaptopurine, 6-MP or its brand name Purinethol) using S-adenosyl-L-methionine as the methyl donor. TPMT activity modulates the cytotoxic effects of thiopurine prodrugs. A natural substrate for this enzyme has yet to be identified. This chain is Thiopurine S-methyltransferase (Tpmt), found in Mus musculus (Mouse).